The primary structure comprises 89 residues: Small ribosomal subunit protein uS15 (89 aa).

This sequence belongs to the universal ribosomal protein uS15 family. As to quaternary structure, part of the 30S ribosomal subunit. Forms a bridge to the 50S subunit in the 70S ribosome, contacting the 23S rRNA.

Its function is as follows. One of the primary rRNA binding proteins, it binds directly to 16S rRNA where it helps nucleate assembly of the platform of the 30S subunit by binding and bridging several RNA helices of the 16S rRNA. Forms an intersubunit bridge (bridge B4) with the 23S rRNA of the 50S subunit in the ribosome. The protein is Small ribosomal subunit protein uS15 of Streptococcus uberis (strain ATCC BAA-854 / 0140J).